Reading from the N-terminus, the 333-residue chain is Ribosomal RNA small subunit methyltransferase H (333 aa).

Residues 39–41 (GGY), D57, F84, D101, and Q108 each bind S-adenosyl-L-methionine.

The protein belongs to the methyltransferase superfamily. RsmH family.

It is found in the cytoplasm. It catalyses the reaction cytidine(1402) in 16S rRNA + S-adenosyl-L-methionine = N(4)-methylcytidine(1402) in 16S rRNA + S-adenosyl-L-homocysteine + H(+). In terms of biological role, specifically methylates the N4 position of cytidine in position 1402 (C1402) of 16S rRNA. The polypeptide is Ribosomal RNA small subunit methyltransferase H (Dinoroseobacter shibae (strain DSM 16493 / NCIMB 14021 / DFL 12)).